A 123-amino-acid polypeptide reads, in one-letter code: Large ribosomal subunit protein uL14c (123 aa).

Belongs to the universal ribosomal protein uL14 family. Part of the 50S ribosomal subunit.

It is found in the plastid. It localises to the chloroplast. Binds to 23S rRNA. This chain is Large ribosomal subunit protein uL14c, found in Brachypodium distachyon (Purple false brome).